Consider the following 869-residue polypeptide: MDAAGASCSSVDAVARELLMATLEELSQEQLKRFRHKLRDAPLDGRSIPWGRLERSDAVDLVDKLIEFYEPVPAVEMTRQVLKRSDIRDVASRLKQQQLQKLGPTSVLLSVSAFKKKYREHVLRQHAKVKERNARSVKINKRFTKLLIAPGTGAVEDELLGPLGEPEPERARRSDTHTFNRLFRGNDEESSQPLTVVLQGPAGIGKTMAAKKILYDWAAGKLYHSQVDFAFFMPCGELLERPGKRSLADLVLDQCPDRAWPVKRILAQPNRLLFILDGADELPTLPSSEATPCKDPLEATSGLRVLSGLLSQELLPGARLLVTTRHAATGRLQGRLCSPQCAEIRGFSDKDKKKYFFKFFRDERKAERAYRFVKENETLFALCFVPFVCWIVCTVLQQQLELGRDLSRTSKTTTSVYLLFITSMLKSAGTNGPRVQGELRTLCRLAREGILDHHKAQFSEEDLEKLKLRGSQVQTIFLNKKEIPGVLKTEVTYQFIDQSFQEFLAALSYLLEAERTPGTPAGGVQKLLNSDAELRGHLALTTRFLFGLLNTEGLRDIGNHFGCVVPDHVKKDTLRWVQGQSHPKGPPVGAKKTAELEDIEDAEEEEEEEEDLNFGLELLYCLYETQEEDFVRQALSSLPEIVLERVRLTRMDLEVLNYCVQCCPDGQALRLVSCGLVAAKEKKKKKKSLVKRLKGSQSTKKQPPVSLLRPLCETMTTPKCHLSVLILSHCRLPDAVCRDLSEALKVAPALRELGLLQSRLTNTGLRLLCEGLAWPKCQVKTLRMQLPDLQEVINYLVIVLQQSPVLTTLDLSGCQLPGVIVEPLCAALKHPKCSLKTLSLTSVELSENSLRDLQAVKTSKPDLSIIYSK.

Residues 37–128 (KLRDAPLDGR…REHVLRQHAK (92 aa)) form the Pyrin domain. One can recognise an NACHT domain in the interval 194–511 (LTVVLQGPAG…EFLAALSYLL (318 aa)). 200–207 (GPAGIGKT) serves as a coordination point for ATP. Positions 350 to 354 (KDKKK) are disordered. The LRR 1 repeat unit spans residues 460–485 (EEDLEKLKLRGSQVQTIFLNKKEIPG). A disordered region spans residues 577-608 (VQGQSHPKGPPVGAKKTAELEDIEDAEEEEEE). Residues 596–608 (LEDIEDAEEEEEE) show a composition bias toward acidic residues. LRR repeat units lie at residues 635–658 (LSSL…VLNY) and 837–860 (TLSL…KTSK).

It belongs to the NLRP family. In terms of assembly, homomultimer; forms the NLRP6 inflammasome polymeric complex, a filament composed of homopolymers in response to pathogens and other damage-associated signals. The core of NLRP6 inflammasomes consists of a signal sensor component (NLRP6), an adapter (PYCARD/ASC), which recruits effector pro-inflammatory caspases (CASP1 and CASP4). Interacts (via pyrin domain) with PYCARD/ASC (via pyrin domain); interaction takes place following NLRP6 activation and formation of liquid-liquid phase separation (LLPS), initiating nucleation which greatly enhances further addition of soluble PYCARD/ASC molecules to the speck in a prion-like polymerization process. Clustered PYCARD/ASC nucleates the formation of CASP1 (or possibly CASP4) filaments through the interaction of their respective CARD domains, acting as a platform for CASP1 polymerization. CASP1 filament formation increases local enzyme concentration, resulting in trans-autocleavage and activation. Active CASP1 then processes IL1B and IL18 precursors, leading to the release of mature cytokines in the extracellular milieu and inflammatory response. Interacts with DHX15. In terms of processing, polyubiquitinated with 'Lys-63'-linked chains, promoting the interaction with PYCARD/ASC and formation of the NLRP6 inflammasome. Deubiquitination by CYLD decreases the interaction with PYCARD/ASC. In terms of tissue distribution, highly expressed in the gastrointestinal tract, predominantly in colonic myofibroblasts and in colonic epithelial and endothelial cells. Within the intestinal mucosa, highly expressed by goblet cells. Also expressed in hepatocytes and in immune cells, including CD4(+) and CD8(+) T-cells, dendritic cells, mastocytes and peritoneal macrophages, as well as in lung, kidney, bladder and gonads.

The protein localises to the cytoplasm. The protein resides in the inflammasome. It localises to the cell membrane. Its subcellular location is the nucleus membrane. Acts as the sensor component of the NLRP6 inflammasome, which mediates inflammasome activation in response to various pathogen-associated signals, leading to maturation and secretion of IL1B and IL18. Inflammasomes are supramolecular complexes that assemble in the cytosol in response to pathogens and other damage-associated signals and play critical roles in innate immunity and inflammation. Acts as a recognition receptor (PRR): recognizes and binds specific pathogens and other damage-associated signals, such as lipoteichoic acid (LTA), a cell-wall component of Gram-positive bacteria, or double stranded RNA (dsRNA). May also recognize and bind lipopolysaccharide (LPS), a major component of the outer membrane of Gram-negative bacteria; however, LPS is probably not a major activator of the NLRP6 inflammasome. Following LTA- or dsRNA-binding, NLRP6 undergoes liquid-liquid phase separation (LLPS), enhancing multivalent interactions, an essential step for the formation of the NLRP6 inflammasome polymeric complex. The NLRP6 inflammasome acts by promoting recruitment of effector pro-inflammatory caspases (CASP1 and/or CASP4) that catalyze maturation and secretion of IL1B and IL18 in the extracellular milieu. The NLRP6 inflammasome plays a central role in the maintenance of epithelial integrity and host defense against microbial infections in the intestine. Required to restrict infection against Gram-positive bacteria by recognizing lipoteichoic acid (LTA), leading to recruitment of CASP4 and CASP1, and subsequent maturation and secretion of IL1B and IL18. Involved in intestinal antiviral innate immunity together with DHX15: recognizes and binds viral dsRNA to restrict infection by enteric viruses through the interferon pathway and GSDMD-dependent release of IL18. Required to prevent infection by the apicomplexan parasite C.tyzzeri in enterocytes by promoting GSDMD-dependent release of IL18. The NLRP6 inflammasome may also regulate the gut microbiota composition by acting as a sensor of microbiota-associated metabolites to form a PYCARD/ASC-dependent inflammasome for downstream IL18 release and secretion of antimicrobial peptides. Its role in the regulation of the gut microbiota composition is however subject to discussion. Essential for gut mucosal self-renewal and proliferation. Regulate mucus secretion in an inflammasome- and autophagy-dependent manner to prevent invasion by enteric bacteria. During systemic bacterial infections, the NLRP6 inflammasome negatively regulates neutrophil recruitment and neutrophil extracellular traps (NETs) formation. May promote peripheral nerve recovery following injury via an inflammasome-independent mechanism. The chain is NACHT, LRR and PYD domains-containing protein 6 from Mus musculus (Mouse).